A 352-amino-acid polypeptide reads, in one-letter code: Ketoisovalerate oxidoreductase subunit VorB (352 aa).

Heterotrimer of the VorA, VorB and VorC subunits.

It carries out the reaction 3-methyl-2-oxobutanoate + 2 oxidized [2Fe-2S]-[ferredoxin] + CoA = 2-methylpropanoyl-CoA + 2 reduced [2Fe-2S]-[ferredoxin] + CO2 + H(+). This chain is Ketoisovalerate oxidoreductase subunit VorB (vorB), found in Methanothermobacter marburgensis (strain ATCC BAA-927 / DSM 2133 / JCM 14651 / NBRC 100331 / OCM 82 / Marburg) (Methanobacterium thermoautotrophicum).